We begin with the raw amino-acid sequence, 315 residues long: Pantothenate kinase (315 aa).

94–101 contacts ATP; sequence GSVAVGKS.

The protein belongs to the prokaryotic pantothenate kinase family.

The protein localises to the cytoplasm. The catalysed reaction is (R)-pantothenate + ATP = (R)-4'-phosphopantothenate + ADP + H(+). The protein operates within cofactor biosynthesis; coenzyme A biosynthesis; CoA from (R)-pantothenate: step 1/5. This chain is Pantothenate kinase, found in Citrobacter koseri (strain ATCC BAA-895 / CDC 4225-83 / SGSC4696).